Reading from the N-terminus, the 499-residue chain is Probable cytosol aminopeptidase (499 aa).

Residues Lys263 and Asp268 each coordinate Mn(2+). Lys275 is a catalytic residue. Asp286, Asp345, and Glu347 together coordinate Mn(2+). The active site involves Arg349.

Belongs to the peptidase M17 family. The cofactor is Mn(2+).

The protein resides in the cytoplasm. The enzyme catalyses Release of an N-terminal amino acid, Xaa-|-Yaa-, in which Xaa is preferably Leu, but may be other amino acids including Pro although not Arg or Lys, and Yaa may be Pro. Amino acid amides and methyl esters are also readily hydrolyzed, but rates on arylamides are exceedingly low.. The catalysed reaction is Release of an N-terminal amino acid, preferentially leucine, but not glutamic or aspartic acids.. Presumably involved in the processing and regular turnover of intracellular proteins. Catalyzes the removal of unsubstituted N-terminal amino acids from various peptides. The polypeptide is Probable cytosol aminopeptidase (Chlamydia caviae (strain ATCC VR-813 / DSM 19441 / 03DC25 / GPIC) (Chlamydophila caviae)).